The sequence spans 183 residues: Large ribosomal subunit protein eL18 (183 aa).

A disordered region spans residues 150-183 (RHFGPAPGAPRSHTKPYVRTKGHEKARPSRRANV).

This sequence belongs to the eukaryotic ribosomal protein eL18 family.

The protein localises to the cytoplasm. This Bombyx mori (Silk moth) protein is Large ribosomal subunit protein eL18 (RpL18).